The chain runs to 1388 residues: Kinesin-like protein KIF15 (1388 aa).

A disordered region spans residues 1 to 25 (MAPGCKTELRSVTNGQSNQPSNEGD). A compositionally biased stretch (polar residues) spans 10-22 (RSVTNGQSNQPSN). The Kinesin motor domain maps to 26 to 363 (AIKVFVRIRP…LNFAQRAKLI (338 aa)). 109–116 (GQTGSGKT) contacts ATP. The stretch at 368–1388 (VVNEDTQGNV…FLKEKKRSES (1021 aa)) forms a coiled coil. Thr-399 carries the post-translational modification Phosphothreonine. Position 568 is a phosphoserine (Ser-568). N6-acetyllysine is present on Lys-1009. Phosphoserine occurs at positions 1141 and 1169. The interval 1228 to 1250 (QKENSDQNHPDNQQLKNEQEESI) is disordered.

The protein belongs to the TRAFAC class myosin-kinesin ATPase superfamily. Kinesin family. KLP2 subfamily. In terms of assembly, interacts with MKI67 and TPX2. Expressed in testis, colon, thymus and in breast cancer.

It is found in the cytoplasm. It localises to the cytoskeleton. The protein resides in the spindle. Plus-end directed kinesin-like motor enzyme involved in mitotic spindle assembly. The chain is Kinesin-like protein KIF15 (KIF15) from Homo sapiens (Human).